The following is a 147-amino-acid chain: Mitochondrial import receptor subunit TOM20 homolog (147 aa).

Residues 1 to 3 (MVA) lie on the Mitochondrial intermembrane side of the membrane. A helical transmembrane segment spans residues 4-26 (VGKTSAIAAGVCGALLLGYCIYF). The Cytoplasmic portion of the chain corresponds to 27-147 (DRKRRSDPNF…AQNLSEDDVE (121 aa)).

It belongs to the Tom20 family. Forms part of the preprotein translocase complex of the outer mitochondrial membrane (TOM complex). Interacts with tom22.

Its subcellular location is the mitochondrion outer membrane. Its function is as follows. Central component of the receptor complex responsible for the recognition and translocation of cytosolically synthesized mitochondrial preproteins. Together with tom22 functions as the transit peptide receptor at the surface of the mitochondrion outer membrane and facilitates the movement of preproteins into the tom40 translocation pore. The chain is Mitochondrial import receptor subunit TOM20 homolog (tomm20) from Xenopus laevis (African clawed frog).